A 4454-amino-acid chain; its full sequence is E3 ubiquitin-protein ligase HUWE1 (4454 aa).

Residues 521–575 (RASSSNSSTSISGPGPGPGPGPGPGPGPGPGPGPGPGLGPSLGPGPGPGPRPGVQ) form a disordered region. The segment covering 523-533 (SSSNSSTSISG) has biased composition (low complexity). Pro residues predominate over residues 535-571 (GPGPGPGPGPGPGPGPGPGPGPGLGPSLGPGPGPGPR). Residues serine 724 and serine 725 each carry the phosphoserine modification. Disordered stretches follow at residues 781–834 (QKAD…VVGT), 1054–1077 (DEKA…AGSM), and 1094–1114 (TLAP…KSKI). Positions 801–811 (ASSEDEEEEEV) are enriched in acidic residues. Positions 813–832 (AMQSFNSAQQNETEPNQQVV) are enriched in polar residues. Phosphoserine is present on serine 816. At serine 1160 the chain carries Phosphoserine. Over residues 1367–1378 (LSKEKEGSRGEE) the composition is skewed to basic and acidic residues. Residues 1367–1396 (LSKEKEGSRGEEEAGQEEGGSRREPQVNQQ) are disordered. The UBA domain occupies 1392 to 1431 (QVNQQQLQQLMDMGFTREHAMEALLNTSTMEQATEYLLTH). Phosphoserine occurs at positions 1444, 1446, 1458, and 1471. Residues 1446–1465 (SEEDQMMRAIAMSLGQDIPM) form the UIM domain. The interval 1472–1491 (PEEVACRKEEEERKAREKQE) is disordered. The 78-residue stretch at 1679–1756 (RAQMTKYLQS…ETGNRRPVML (78 aa)) folds into the WWE domain. Residues 1766 to 1802 (KNSKSSNGQELEKTLEESKETDIKRKENKGNDIPLAL) are disordered. The segment covering 1775–1795 (ELEKTLEESKETDIKRKENKG) has biased composition (basic and acidic residues). Phosphoserine is present on serine 1983. 3 disordered regions span residues 2095-2142 (APAE…SKPL), 2339-2420 (SLFG…QEMQ), and 2433-2556 (LERD…ASPL). Residues 2097–2112 (AETSTTGTSQGEGAST) are compositionally biased toward low complexity. Threonine 2112 carries the phosphothreonine modification. Residues 2114–2134 (EETREGKKDKEGDRTSEEGKQ) are compositionally biased toward basic and acidic residues. The span at 2339 to 2368 (SLFGSKSASSKSKSEQDAQGASQDSSSHQQ) shows a compositional bias: low complexity. Serine 2343 is subject to Phosphoserine. An N6-acetyllysine modification is found at lysine 2344. 2 stretches are compositionally biased toward acidic residues: residues 2372 to 2383 (EPGEAEVQEEDH) and 2391 to 2402 (ADGDIMDGEAET). 3 positions are modified to phosphoserine: serine 2439, serine 2442, and serine 2468. Residues 2465–2475 (SNLSQASTLQA) show a composition bias toward polar residues. Over residues 2485 to 2549 (DPEDEEEHTQ…SEMELDEDYP (65 aa)) the composition is skewed to acidic residues. Serine 2604, serine 2609, and serine 2612 each carry phosphoserine. Threonine 2631 carries the post-translational modification Phosphothreonine. Phosphoserine occurs at positions 2661, 2672, and 2696. Basic and acidic residues predominate over residues 2781–2793 (IIDKGKEDKENRD). 2 disordered regions span residues 2781–3047 (IIDK…GVDP) and 3113–3136 (QQRA…MDPV). Over residues 2794–2813 (QSAQCTVSKTNDSTEQNVSD) the composition is skewed to polar residues. The span at 2815–2849 (TPMPDSYPTTPSSTDAPTSESKETLGTLQPSQQQP) shows a compositional bias: low complexity. Threonine 2828 carries the phosphothreonine modification. Composition is skewed to polar residues over residues 2895–2912 (AETT…TSLS), 2924–2941 (AVSS…SLAS), and 2954–2967 (AGSS…SSTP). Phosphoserine occurs at positions 2903, 2910, 2912, 2938, 2964, and 2965. Phosphothreonine is present on threonine 2966. The segment covering 2990–3009 (PPEDSSPPASSESSSTRDSA) has biased composition (low complexity). A Phosphoserine modification is found at serine 2995. Phosphoserine is present on residues serine 3193, serine 3194, serine 3199, serine 3204, and serine 3212. An Omega-N-methylarginine modification is found at arginine 3226. Disordered regions lie at residues 3320-3343 (PKLS…SHEN), 3431-3458 (QRTK…SQSS), 3482-3501 (GKNS…ETSL), 3548-3590 (SEVQ…TTPV), and 3615-3642 (TPTT…EGGS). Residues 3432-3446 (RTKETNCESDRERGS) show a composition bias toward basic and acidic residues. The span at 3447–3458 (KQACSPCSSQSS) shows a compositional bias: low complexity. 2 stretches are compositionally biased toward low complexity: residues 3552–3579 (TNSS…ATAP) and 3615–3628 (TPTT…TSTT). A phosphoserine mark is found at serine 3633, serine 3740, serine 3830, serine 3835, serine 3837, and serine 3838. Positions 3815–3836 (TRRANKKAKQTGRLGSSGLGSA) are disordered. Residues 3826 to 3836 (GRLGSSGLGSA) are compositionally biased toward low complexity. Disordered stretches follow at residues 3859-3927 (EGQR…LPLL) and 3974-4028 (RESK…SSSL). Residues 3871–3880 (TSESSNQSET) show a composition bias toward polar residues. A phosphoserine mark is found at serine 3887, serine 3895, and serine 3907. A compositionally biased stretch (polar residues) spans 3894–3905 (PSPSAQDTQSIV). Phosphothreonine is present on threonine 3910. Basic and acidic residues-rich tracts occupy residues 3913-3922 (GEKEKEERPP) and 3974-3995 (RESK…KDEP). Phosphoserine is present on residues serine 3986 and serine 3999. Pro residues predominate over residues 3996–4005 (PPLSPAPLTP). Residues threonine 4004 and threonine 4007 each carry the phosphothreonine modification. Over residues 4018 to 4028 (EPSSMHISSSL) the composition is skewed to polar residues. One can recognise an HECT domain in the interval 4118–4454 (SPEEMKNRLY…QECSEGFGLA (337 aa)). Residue tyrosine 4351 is modified to Phosphotyrosine. The active-site Glycyl thioester intermediate is cysteine 4421.

This sequence belongs to the UPL family. TOM1/PTR1 subfamily. Interacts with isoform p14ARF of CDKN2A which strongly inhibits HUWE1 ubiquitin ligase activity. Interacts with MYCN, POLB and CDC6. Interacts with isoform 2 of PA2G4. Interacts with NR1D1. Interacts with AMBRA1. Interacts with HAPSTR1. Interacts with HAPSTR2. In hepatocytes, interacts with PAQR3; the interaction promotes PPARA poylubiquitination and STUB1-mediated degradation. In terms of processing, phosphorylated on tyrosine, phosphorylation is probably required for its ability to inhibit TP53 transactivation. As to expression, widely expressed.

Its subcellular location is the cytoplasm. The protein resides in the nucleus. The protein localises to the mitochondrion. The enzyme catalyses S-ubiquitinyl-[E2 ubiquitin-conjugating enzyme]-L-cysteine + [acceptor protein]-L-lysine = [E2 ubiquitin-conjugating enzyme]-L-cysteine + N(6)-ubiquitinyl-[acceptor protein]-L-lysine.. The protein operates within protein modification; protein ubiquitination. Functionally, E3 ubiquitin-protein ligase which mediates ubiquitination and subsequent proteasomal degradation of target proteins. Regulates apoptosis by catalyzing the polyubiquitination and degradation of MCL1. Mediates monoubiquitination of DNA polymerase beta (POLB) at 'Lys-41', 'Lys-61' and 'Lys-81', thereby playing a role in base-excision repair. Also ubiquitinates the p53/TP53 tumor suppressor and core histones including H1, H2A, H2B, H3 and H4. Ubiquitinates MFN2 to negatively regulate mitochondrial fusion in response to decreased stearoylation of TFRC. Ubiquitination of MFN2 also takes place following induction of mitophagy; AMBRA1 acts as a cofactor for HUWE1-mediated ubiquitination. Regulates neural differentiation and proliferation by catalyzing the polyubiquitination and degradation of MYCN. May regulate abundance of CDC6 after DNA damage by polyubiquitinating and targeting CDC6 to degradation. Mediates polyubiquitination of PA2G4. Acts in concert with MYCBP2 to regulate the circadian clock gene expression by promoting the lithium-induced ubiquination and degradation of NR1D1. Binds to an upstream initiator-like sequence in the preprodynorphin gene. Mediates HAPSTR1 degradation, but is also a required cofactor in the pathway by which HAPSTR1 governs stress signaling. Acts as a regulator of the JNK and NF-kappa-B signaling pathways by mediating assembly of heterotypic 'Lys-63'-/'Lys-48'-linked branched ubiquitin chains that are then recognized by TAB2: HUWE1 mediates branching of 'Lys-48'-linked chains of substrates initially modified with 'Lys-63'-linked conjugates by TRAF6. 'Lys-63'-/'Lys-48'-linked branched ubiquitin chains protect 'Lys-63'-linkages from CYLD deubiquitination. Ubiquitinates PPARA in hepatocytes. The sequence is that of E3 ubiquitin-protein ligase HUWE1 (Huwe1) from Rattus norvegicus (Rat).